A 183-amino-acid polypeptide reads, in one-letter code: MAQRSGKITLYEGKHFTGRKLEVFGDCDNFQDRGFMNRVNSIRVESGAWVCFDHPDFRGQQFILEHGDYPEFFRWNGHNDHMGSCRPVGMHGEHFRIDIFEGCNFTGQCLEFVEDCPFLQSRGWAKSCVNAIKVYGDGAWVLYEEPNYRGRMYVVERGDFRSFSDWEAHSARVQSLRRVLNFF.

4 Beta/gamma crystallin 'Greek key' domains span residues 6–46 (GKIT…RVES), 47–89 (GAWV…RPVG), 95–136 (FRID…KVYG), and 138–180 (GAWV…RRVL).

This sequence belongs to the beta/gamma-crystallin family. In terms of assembly, monomer. As to expression, detected in the auditory hindbrain where it is highly expressed in the medial nucleus of the trapezoid body, but also present in other nuclei of the superior olivary complex.

Crystallins are the dominant structural components of the vertebrate eye lens. Also plays an important role for integrity and function of auditory nuclei. The sequence is that of Gamma-crystallin N from Rattus norvegicus (Rat).